The chain runs to 211 residues: Peptidyl-prolyl cis-trans isomerase FKBP14 (211 aa).

A signal peptide spans 1–19; it reads MRFFLWNAILALWVTVLSG. Residues C38 and C96 are joined by a disulfide bond. Positions 45 to 135 constitute a PPIase FKBP-type domain; it reads GDLMLVHYEG…IFNIDLLEIR (91 aa). Residues 135-170 form the EF-hand 1 domain; the sequence is RNGPRSHESFQEMDLNDDWRLSKHEVKVYLQKEFEK. Residues D148, N150, D152, R154, and E159 each coordinate Ca(2+). N176 carries N-linked (GlcNAc...) asparagine glycosylation. The 33-residue stretch at 179–211 folds into the EF-hand 2 domain; sequence HHDALVEDIFDKEDEDKDGFISAREFTYVHDEL. Residues D192, D194, D196, and E203 each contribute to the Ca(2+) site. The Prevents secretion from ER motif lies at 208-211; that stretch reads HDEL.

In terms of assembly, monomer. Homodimer. Interacts with type III, type IV and type X collagens.

Its subcellular location is the endoplasmic reticulum lumen. It carries out the reaction [protein]-peptidylproline (omega=180) = [protein]-peptidylproline (omega=0). With respect to regulation, inhibited by tacrolimus/FK506. In terms of biological role, PPIase which accelerates the folding of proteins during protein synthesis. Has a preference for substrates containing 4-hydroxylproline modifications, including type III collagen. May also target type VI and type X collagens. In Mus musculus (Mouse), this protein is Peptidyl-prolyl cis-trans isomerase FKBP14 (Fkbp14).